Consider the following 1278-residue polypeptide: Mediator of RNA polymerase II transcription subunit 16 (1278 aa).

Acidic residues predominate over residues 1–10 (MNQQNPEEEV). Disordered regions lie at residues 1–21 (MNQQ…GGGI), 530–557 (TKDF…GDEK), and 839–861 (SAGT…SPAT). Residues 547–557 (APKEPDSGDEK) show a composition bias toward basic and acidic residues. Residues 841–861 (GTGSNRNNVTSPTQNASSPAT) are compositionally biased toward polar residues.

This sequence belongs to the plant Mediator complex subunit 16 family. In terms of assembly, component of the Mediator complex.

It is found in the nucleus. Functionally, component of the Mediator complex, a coactivator involved in the regulated transcription of nearly all RNA polymerase II-dependent genes. Mediator functions as a bridge to convey information from gene-specific regulatory proteins to the basal RNA polymerase II transcription machinery. The Mediator complex, having a compact conformation in its free form, is recruited to promoters by direct interactions with regulatory proteins and serves for the assembly of a functional preinitiation complex with RNA polymerase II and the general transcription factors. Involved in the regulation of the circadian clock, in the control of flowering time, in freezing- and osmotic-stress tolerance and in both salicylic acid- and jasmonate-mediated defense gene expression. This chain is Mediator of RNA polymerase II transcription subunit 16 (MED16), found in Arabidopsis thaliana (Mouse-ear cress).